The primary structure comprises 723 residues: F-box protein MAX2 homolog B (723 aa).

Residues Ala2–Leu55 form the F-box domain.

In terms of assembly, part of a putative SCF (SKP1/Cullin/F-box) ubiquitin ligase complex. Interacts with KAI2IA in the presence of (-)-germacrene D. In terms of tissue distribution, mainly expressed in fully expanded leaves, lateral roots, axillary and shoot apex, and, to a lower extent, in internodes and nodes.

The protein localises to the nucleus. It is found in the cytoplasm. Component of SCF(ASK-cullin-F-box) E3 ubiquitin ligase complexes, which may mediate the ubiquitination and subsequent proteasomal degradation of target proteins. Is necessary for responses to strigolactones and may be involved in the ubiquitin-mediated degradation of specific proteins that activate axillary growth. Targets probably SMAX1A to degradation upon the formation of an E3 SCF ubiquitin ligase complex (ASK-cullin-F-box) containing MAX2B and KAI2IA in response to (-)-germacrene D in the stigma. The sequence is that of F-box protein MAX2 homolog B from Petunia hybrida (Petunia).